The sequence spans 156 residues: ATP synthase subunit b (156 aa).

A helical membrane pass occupies residues 7–29; sequence LIGQMGTFLVFWWFVNKVIWPMF.

Belongs to the ATPase B chain family. In terms of assembly, F-type ATPases have 2 components, F(1) - the catalytic core - and F(0) - the membrane proton channel. F(1) has five subunits: alpha(3), beta(3), gamma(1), delta(1), epsilon(1). F(0) has three main subunits: a(1), b(2) and c(10-14). The alpha and beta chains form an alternating ring which encloses part of the gamma chain. F(1) is attached to F(0) by a central stalk formed by the gamma and epsilon chains, while a peripheral stalk is formed by the delta and b chains.

The protein resides in the cell inner membrane. Functionally, f(1)F(0) ATP synthase produces ATP from ADP in the presence of a proton or sodium gradient. F-type ATPases consist of two structural domains, F(1) containing the extramembraneous catalytic core and F(0) containing the membrane proton channel, linked together by a central stalk and a peripheral stalk. During catalysis, ATP synthesis in the catalytic domain of F(1) is coupled via a rotary mechanism of the central stalk subunits to proton translocation. Component of the F(0) channel, it forms part of the peripheral stalk, linking F(1) to F(0). The polypeptide is ATP synthase subunit b (Dichelobacter nodosus (strain VCS1703A)).